Consider the following 123-residue polypeptide: Large ribosomal subunit protein uL29 (123 aa).

Belongs to the universal ribosomal protein uL29 family.

The chain is Large ribosomal subunit protein uL29 (RPL35) from Babesia bovis.